A 957-amino-acid chain; its full sequence is Glycine dehydrogenase (decarboxylating) 2 (957 aa).

Lys-707 bears the N6-(pyridoxal phosphate)lysine mark.

The protein belongs to the GcvP family. As to quaternary structure, the glycine cleavage system is composed of four proteins: P, T, L and H. The cofactor is pyridoxal 5'-phosphate.

It carries out the reaction N(6)-[(R)-lipoyl]-L-lysyl-[glycine-cleavage complex H protein] + glycine + H(+) = N(6)-[(R)-S(8)-aminomethyldihydrolipoyl]-L-lysyl-[glycine-cleavage complex H protein] + CO2. Its function is as follows. The glycine cleavage system catalyzes the degradation of glycine. The P protein binds the alpha-amino group of glycine through its pyridoxal phosphate cofactor; CO(2) is released and the remaining methylamine moiety is then transferred to the lipoamide cofactor of the H protein. This Pseudomonas fluorescens (strain Pf0-1) protein is Glycine dehydrogenase (decarboxylating) 2.